Here is a 254-residue protein sequence, read N- to C-terminus: 5'/3'-nucleotidase SurE (254 aa).

The a divalent metal cation site is built by Asp-9, Asp-10, Ser-40, and Asn-93.

Belongs to the SurE nucleotidase family. It depends on a divalent metal cation as a cofactor.

It is found in the cytoplasm. It carries out the reaction a ribonucleoside 5'-phosphate + H2O = a ribonucleoside + phosphate. The catalysed reaction is a ribonucleoside 3'-phosphate + H2O = a ribonucleoside + phosphate. The enzyme catalyses [phosphate](n) + H2O = [phosphate](n-1) + phosphate + H(+). Nucleotidase with a broad substrate specificity as it can dephosphorylate various ribo- and deoxyribonucleoside 5'-monophosphates and ribonucleoside 3'-monophosphates with highest affinity to 3'-AMP. Also hydrolyzes polyphosphate (exopolyphosphatase activity) with the preference for short-chain-length substrates (P20-25). Might be involved in the regulation of dNTP and NTP pools, and in the turnover of 3'-mononucleotides produced by numerous intracellular RNases (T1, T2, and F) during the degradation of various RNAs. This Yersinia pestis bv. Antiqua (strain Antiqua) protein is 5'/3'-nucleotidase SurE.